The primary structure comprises 444 residues: Phosphoglucosamine mutase (444 aa).

S102 functions as the Phosphoserine intermediate in the catalytic mechanism. Mg(2+) contacts are provided by S102, D241, D243, and D245. Phosphoserine is present on S102.

It belongs to the phosphohexose mutase family. Mg(2+) is required as a cofactor. Activated by phosphorylation.

It carries out the reaction alpha-D-glucosamine 1-phosphate = D-glucosamine 6-phosphate. Catalyzes the conversion of glucosamine-6-phosphate to glucosamine-1-phosphate. The polypeptide is Phosphoglucosamine mutase (Glaesserella parasuis serovar 5 (strain SH0165) (Haemophilus parasuis)).